A 134-amino-acid chain; its full sequence is Ribosome-binding factor A (134 aa).

The protein belongs to the RbfA family. Monomer. Binds 30S ribosomal subunits, but not 50S ribosomal subunits or 70S ribosomes.

It is found in the cytoplasm. One of several proteins that assist in the late maturation steps of the functional core of the 30S ribosomal subunit. Associates with free 30S ribosomal subunits (but not with 30S subunits that are part of 70S ribosomes or polysomes). Required for efficient processing of 16S rRNA. May interact with the 5'-terminal helix region of 16S rRNA. This chain is Ribosome-binding factor A, found in Psychrobacter arcticus (strain DSM 17307 / VKM B-2377 / 273-4).